The chain runs to 818 residues: Protein TOC75-3, chloroplastic (818 aa).

Residues 1 to 79 (MAAFSVNGQL…LKNLAKPLAV (79 aa)) constitute a chloroplast transit peptide. Over residues 15–41 (TSSTASTSLSSRRKFLSPSSSRLPRIS) the composition is skewed to low complexity. Residues 15-67 (TSSTASTSLSSRRKFLSPSSSRLPRISTQSPRVPSIKCSKSLPNRDTETSSKD) are disordered. Positions 57 to 67 (PNRDTETSSKD) are enriched in basic and acidic residues. The transit peptide at 80–140 (ASVSSAASFF…KLFSPSPAVA (61 aa)) directs the protein to the chloroplast; outer membrane. 3 POTRA domains span residues 141–246 (DEEQ…FAES), 247–364 (TWQS…VVEG), and 365–448 (DITQ…LKEL). The Chloroplast intermembrane segment spans residues 141-473 (DEEQSPDWDS…GRGGAPTLAS (333 aa)). The chain crosses the membrane as a beta stranded span at residues 474–482 (FQPGGSVTF). Topologically, residues 483–509 (EHRNLQGLNRSLMGSVTTSNFLNPQDD) are cytoplasmic. The beta stranded transmembrane segment at 510-518 (LSFKLEYVH) threads the bilayer. The Chloroplast intermembrane segment spans residues 519 to 562 (PYLDGVYNPRNRTFKTSCFNSRKLSPVFTGGPGVEEVPPIWVDR). The chain crosses the membrane as a beta stranded span at residues 563–570 (AGVKANIT). Residues 571 to 578 (ENFTRQSK) are Cytoplasmic-facing. The chain crosses the membrane as a beta stranded span at residues 579 to 586 (FTYGLVME). Residues 587–693 (EITTRDESSH…VEQGAGKSPP (107 aa)) are Chloroplast intermembrane-facing. Residues 694-702 (PVLVLHGHY) form a beta stranded membrane-spanning segment. Topologically, residues 703–714 (GGCVGDLPSYDA) are cytoplasmic. A beta stranded membrane pass occupies residues 715–723 (FVLGGPYSV). Residues 724 to 785 (RGYNMGELGA…VYRRTGQGSS (62 aa)) lie on the Chloroplast intermembrane side of the membrane. The chain crosses the membrane as a beta stranded span at residues 786–792 (YGAGVKL). Residues 793-806 (GLVRAEYAVDHNNG) lie on the Cytoplasmic side of the membrane. The chain crosses the membrane as a beta stranded span at residues 807-814 (TGALFFRF). Residues 815–818 (GERY) lie on the Chloroplast intermembrane side of the membrane.

It belongs to the TOC75 family. In terms of assembly, part of the TOC core complex that includes a protein for the specific recognition of transit peptides surrounded by a ring composed of four proteins forming translocation channels, and four to five GTP-binding proteins providing energy. This core complex can interact with components of the TIC complex to form a larger import complex. Chloroplastic protein precursors such as prSS (precursor of the RuBisCO small subunit) also interact with these complexes. The TOC complex contains a specific subset of polar lipids such as digalactosyldiacylglyceride (DGDG), phosphatidylcholine (PC) and phosphatidylglycerol (PG). TOC75-3 interacts with TOC34/OEP34, TOC159/TOC86, TOC132 and TOC120. Interacts with SP1. Interacts with TIC236. Mostly expressed in young and actively dividing photosynthetic tissues and, to a lower extent, in old leaves and roots. Particularly low levels in leaves after etiolation.

The protein localises to the plastid. It localises to the chloroplast outer membrane. Its function is as follows. Essential protein. Mediates the insertion of proteins targeted to the outer membrane of chloroplasts. Required for the import of protein precursors into chloroplasts. Forms the voltage-dependent preprotein translocation channels (hydrophilic beta barrel) of the TOC complex in the chloroplastic outer membrane. This Arabidopsis thaliana (Mouse-ear cress) protein is Protein TOC75-3, chloroplastic.